The chain runs to 245 residues: MANLGCWMLVVFVATWSDLGLCKKRPKPGGWNTGGSRYPGQGSPGGNRYPPQGGGGWGQPHGGGWGQPHGGGWGQPHGGGWGQGGGTHNQWHKPSKPKTSMKHMAGAAAAGAVVGGLGGYMLGSAMSRPLIHFGNDYEDRYYRENMYRYPNQVYYRPVDQYSNQNNFVHDCVNITIKQHTVTTTTKGENFTETDVKMMERVVEQMCITQYEKESQAYYQRGSSMVLFSSPPVILLISFLIFLIVG.

Positions methionine 1–cysteine 22 are cleaved as a signal peptide. Residues lysine 23 to serine 222 form an interaction with GRB2, ERI3 and SYN1 region. Positions arginine 25 to lysine 102 are disordered. 4 tandem repeats follow at residues proline 51–glutamine 59, proline 60–glutamine 67, proline 68–glutamine 75, and proline 76–glutamine 83. The interval proline 51 to glutamine 83 is 4 X 8 AA tandem repeats of P-H-G-G-G-W-G-Q. Over residues glutamine 52 to threonine 87 the composition is skewed to gly residues. Cu(2+) is bound by residues glycine 54, glycine 55, histidine 61, glycine 62, glycine 63, histidine 69, glycine 70, glycine 71, histidine 77, glycine 78, and glycine 79. Basic residues predominate over residues glutamine 90–methionine 101. Cysteine 171 and cysteine 206 are disulfide-bonded. Residues asparagine 173 and asparagine 189 are each glycosylated (N-linked (GlcNAc...) asparagine). The GPI-anchor amidated serine moiety is linked to residue serine 222. Residues serine 223–glycine 245 constitute a propeptide, removed in mature form.

It belongs to the prion family. Monomer and homodimer. Has a tendency to aggregate into amyloid fibrils containing a cross-beta spine, formed by a steric zipper of superposed beta-strands. Soluble oligomers may represent an intermediate stage on the path to fibril formation. Copper binding may promote oligomerization. Interacts with GRB2, APP, ERI3/PRNPIP and SYN1. Mislocalized cytosolically exposed PrP interacts with MGRN1; this interaction alters MGRN1 subcellular location and causes lysosomal enlargement. Interacts with KIAA1191.

The protein localises to the cell membrane. The protein resides in the golgi apparatus. Its primary physiological function is unclear. Has cytoprotective activity against internal or environmental stresses. May play a role in neuronal development and synaptic plasticity. May be required for neuronal myelin sheath maintenance. May play a role in iron uptake and iron homeostasis. Soluble oligomers are toxic to cultured neuroblastoma cells and induce apoptosis (in vitro). Association with GPC1 (via its heparan sulfate chains) targets PRNP to lipid rafts. Also provides Cu(2+) or Zn(2+) for the ascorbate-mediated GPC1 deaminase degradation of its heparan sulfate side chains. This chain is Major prion protein (PRNP), found in Cercopithecus diana (Diana monkey).